The chain runs to 663 residues: Zyxin (663 aa).

Residues 35–438 (PPKPKINPFK…QQDQTLGSQG (404 aa)) are disordered. Composition is skewed to pro residues over residues 122–148 (FPPP…PPPL) and 160–211 (VPVP…PPSV). A compositionally biased stretch (polar residues) spans 298-314 (PQKTTEPPAEASQSSPK). 2 stretches are compositionally biased toward basic and acidic residues: residues 342–353 (QRERPRVLEKPR) and 360–375 (EPEH…ERTR). Polar residues-rich tracts occupy residues 377–393 (LGPQ…QSTG) and 427–438 (TGQQDQTLGSQG). LIM zinc-binding domains lie at 470–531 (ELCG…TLEC), 532–589 (CAVC…RRYA), and 590–660 (PRCC…RARA).

The protein belongs to the zyxin/ajuba family. Interacts (via LIM2 domain) with hesx1/anf1. In terms of tissue distribution, at the early gastrula stage, expressed at a low level in the animal hemisphere. Expression rises by the end of gastrulation in the anterior part of the embryo, where it gradually increases by the midneurula stage. During neurulation, expression continues most intensively in the anterior part of the neural plate and around it. At later stages, intensely expressed in the brain and at lower levels in the spinal cord, eyes, nasal placodes, within somites, and around the cement gland.

The protein localises to the cytoplasm. It localises to the cytoskeleton. Its subcellular location is the cell junction. The protein resides in the focal adhesion. Adhesion plaque protein. May be a component of a signal transduction pathway that mediates adhesion-stimulated changes in gene expression. Suppresses the transcription-repressing activity of hesx1/anf1. This is Zyxin from Xenopus laevis (African clawed frog).